A 793-amino-acid polypeptide reads, in one-letter code: MAADWEEIRRLAADFQRAQFAETVQRLSERNCIEIVSKLVEDKKLDVVHTLDGKEYVTPAQISREIRDELYMHRGRINVVDLQKIINVDLVHVEGRANEIAKSDRGTQLILGQLIDEAYLDRLAEEVNDKLQEAGQVNIAELCKTYDLPGDFLTEALNARLGRVIQGQLDQYNRGMIFTQAFLSRHKACICGLFSGITRPTQINNLLNLYGFQENLVYSMLEELVNSARLKGSVVGGRQDKAIYIPDIYSKAQSTWVESFLKQNGYLEFESLTRLGIPDPINYIKKRFKSSRLLFLKTACVGRTIVDQLEASVEEAINSATWVDLQPMLPSILSEEDVGILLNEVLRSMNVQSSARLLSTSVVSEKFIAGCIALFEDLMQQKAQKEVKNNPVFLITEDDVKQSSALLETSASSKKDKRDERRKKAAEGGGSVKSGGGGNAREIRIRKTKKKGRKEEDSDEETTHSSQGRNKLGDVQFLSVEEIVEVLEEKVCDSSEEMLQELAEQLQRPLSKMYQEVVTTAFLSTSSSGAGGSRKKNMKDLQEEINNLYNNIRLFEKGTKLFSDETQATVAKHVLKTVCTDVTNVLLSFVAAEHMTSDSSAAMTSEIRLKILAKLSDEVRSPLMKLHNSLNGKAIEEFLSCLETSAEECGLFLKKGDKKRERQALSVHRQALCEQLRDAEDPALVLHLTSVLLFQNVTHCMLHAPGRCVPHIIGFLQSKIPEDQHKLLSQYQSLVVKQLVVQGHGAEKKTVPPEGAGGPADSDDTESLQRELHSLSRDIKDTVLAQRKPSVTE.

The tract at residues 2-212 (AADWEEIRRL…INNLLNLYGF (211 aa)) is required for E3 UFM1-protein ligase activity. 2 disordered regions span residues 405-472 (ALLE…RNKL) and 745-793 (GAEK…SVTE). Positions 427 to 439 (EGGGSVKSGGGGN) are enriched in gly residues. The span at 767-781 (SLQRELHSLSRDIKD) shows a compositional bias: basic and acidic residues.

Belongs to the UFL1 family. As to quaternary structure, catalytic component of the UFM1 ribosome E3 ligase (UREL) complex. Interacts with E2-like enzyme UFC1.

The protein resides in the endoplasmic reticulum membrane. It localises to the cytoplasm. Its subcellular location is the cytosol. The protein localises to the nucleus. It is found in the chromosome. E3 protein ligase that mediates ufmylation, the covalent attachment of the ubiquitin-like modifier UFM1 to lysine residues on target proteins, and which plays a key role in various processes, such as ribosome recycling, response to DNA damage, interferon response or reticulophagy (also called ER-phagy). As part of the UREL complex, plays a key role in ribosome recycling by catalyzing mono-ufmylation of RPL26/uL24 subunit of the 60S ribosome. Ufmylation of RPL26/uL24 occurs on free 60S ribosomes following ribosome dissociation: it weakens the junction between post-termination 60S subunits and SEC61 translocons, promoting release and recycling of the large ribosomal subunit from the endoplasmic reticulum membrane. Ufmylation of RPL26/uL24 and subsequent 60S ribosome recycling either take place after normal termination of translation or after ribosome stalling during cotranslational translocation at the endoplasmic reticulum. Involved in reticulophagy in response to endoplasmic reticulum stress by mediating ufmylation of proteins such as CYB5R3 and RPN1, thereby promoting lysosomal degradation of ufmylated proteins. Ufmylation in response to endoplasmic reticulum stress is essential for processes such as hematopoiesis, blood vessel morphogenesis or inflammatory response. The sequence is that of E3 UFM1-protein ligase 1 from Danio rerio (Zebrafish).